A 249-amino-acid chain; its full sequence is MEQFKDLQKSLYIWTDSGELDKRVQTIKEATGGEVAVENVHRLSFSSYANSSFDLIVIECAQLTDNYVKLLHMLKPSGKLHLIAYIGTPASLLQEIKLSGFINCGEDTAANTLTAEKPGYETGSAARLSFAKKAAGVNVWKISGDDEELIDEEDLLDEADKQKPDPSGLRVCSTTGKRKACKNCSCGLAEELESERTTSSANTENAKSSCGNCYLGDAFRCSTCPYLGMPAFKPGEKVQLANNLLKSDI.

The segment at 1–130 (MEQFKDLQKS…ETGSAARLSF (130 aa)) is N-terminal SAM-like domain. The tract at residues 131-161 (AKKAAGVNVWKISGDDEELIDEEDLLDEADK) is linker. [2Fe-2S] cluster-binding residues include C172, C181, C184, and C186. Residues 172–186 (CSTTGKRKACKNCSC) form a fe-S binding site A region. C210, C213, C221, and C224 together coordinate [4Fe-4S] cluster. 2 consecutive short sequence motifs (cx2C motif) follow at residues 210 to 213 (CGNC) and 221 to 224 (CSTC). The segment at 210–224 (CGNCYLGDAFRCSTC) is fe-S binding site B.

Belongs to the anamorsin family. Monomer. [2Fe-2S] cluster is required as a cofactor. It depends on [4Fe-4S] cluster as a cofactor.

Its subcellular location is the cytoplasm. The protein resides in the mitochondrion intermembrane space. Functionally, component of the cytosolic iron-sulfur (Fe-S) protein assembly (CIA) machinery. Required for the maturation of extramitochondrial Fe-S proteins. Part of an electron transfer chain functioning in an early step of cytosolic Fe-S biogenesis, facilitating the de novo assembly of a [4Fe-4S] cluster on the cytosolic Fe-S scaffold complex. Electrons are transferred from NADPH via a FAD- and FMN-containing diflavin oxidoreductase. Together with the diflavin oxidoreductase, also required for the assembly of the diferric tyrosyl radical cofactor of ribonucleotide reductase (RNR), probably by providing electrons for reduction during radical cofactor maturation in the catalytic small subunit. This Drosophila grimshawi (Hawaiian fruit fly) protein is Anamorsin homolog.